The following is a 92-amino-acid chain: Small ribosomal subunit protein uS19 (92 aa).

Belongs to the universal ribosomal protein uS19 family.

Functionally, protein S19 forms a complex with S13 that binds strongly to the 16S ribosomal RNA. This chain is Small ribosomal subunit protein uS19, found in Acholeplasma laidlawii (strain PG-8A).